Here is a 154-residue protein sequence, read N- to C-terminus: MAARLCCQLDPARDVLCLRPVGAESRGRPFPGPLGALPPASPPVVPTDHGAHLSLRGLPVCAFSSAGPCALRFTSARRMETTVNAHGNLPKVLHKRTLGLSAMSTTDLEAYFKDCVFNEWEELGEEVRLKVFVLGGCRHKLVCSPAPCNFFTSA.

The tract at residues 68-117 is mitochondrial targeting sequence; sequence PCALRFTSARRMETTVNAHGNLPKVLHKRTLGLSAMSTTDLEAYFKDCVF.

Belongs to the orthohepadnavirus protein X family. In terms of assembly, may form homodimer. May interact with host CEBPA, CFLAR, CREB1, DDB1, E4F1, HBXIP, HSPD1/HSP60, NFKBIA, POLR2E and SMAD4. Interacts with host SMC5-SMC6 complex and induces its degradation. Interacts with host TRPC4AP; leading to prevent ubiquitination of TRPC4AP. Interacts with host PLSCR1; this interaction promotes ubiquitination and degradation of HBx and impairs HBx-mediated cell proliferation. A fraction may be phosphorylated in insect cells and HepG2 cells, a human hepatoblastoma cell line. Phosphorylated in vitro by host protein kinase C or mitogen-activated protein kinase. N-acetylated in insect cells.

The protein resides in the host cytoplasm. It is found in the host nucleus. It localises to the host mitochondrion. Its function is as follows. Multifunctional protein that plays a role in silencing host antiviral defenses and promoting viral transcription. Does not seem to be essential for HBV infection. May be directly involved in development of cirrhosis and liver cancer (hepatocellular carcinoma). Most of cytosolic activities involve modulation of cytosolic calcium. The effect on apoptosis is controversial depending on the cell types in which the studies have been conducted. May induce apoptosis by localizing in mitochondria and causing loss of mitochondrial membrane potential. May also modulate apoptosis by binding host CFLAR, a key regulator of the death-inducing signaling complex (DISC). Promotes viral transcription by using the host E3 ubiquitin ligase DDB1 to target the SMC5-SMC6 complex to proteasomal degradation. This host complex would otherwise bind to viral episomal DNA, and prevents its transcription. Moderately stimulates transcription of many different viral and cellular transcription elements. Promoters and enhancers stimulated by HBx contain DNA binding sites for NF-kappa-B, AP-1, AP-2, c-EBP, ATF/CREB, or the calcium-activated factor NF-AT. This chain is Protein X, found in Hepatitis B virus genotype B/C subtype adw (isolate Okinawa/pODW282/1998) (HBV-B).